The following is a 290-amino-acid chain: Porphobilinogen deaminase (290 aa).

S-(dipyrrolylmethanemethyl)cysteine is present on C238.

Belongs to the HMBS family. Monomer. Dipyrromethane serves as cofactor.

The catalysed reaction is 4 porphobilinogen + H2O = hydroxymethylbilane + 4 NH4(+). It participates in porphyrin-containing compound metabolism; protoporphyrin-IX biosynthesis; coproporphyrinogen-III from 5-aminolevulinate: step 2/4. Functionally, tetrapolymerization of the monopyrrole PBG into the hydroxymethylbilane pre-uroporphyrinogen in several discrete steps. This is Porphobilinogen deaminase from Caldicellulosiruptor saccharolyticus (strain ATCC 43494 / DSM 8903 / Tp8T 6331).